The sequence spans 129 residues: Follitropin subunit beta (129 aa).

An N-terminal signal peptide occupies residues 1 to 20; that stretch reads MKTVQFCFLFCCWKAICCNS. 6 disulfides stabilise this stretch: Cys21-Cys69, Cys35-Cys84, Cys38-Cys122, Cys46-Cys100, Cys50-Cys102, and Cys105-Cys112. N-linked (GlcNAc...) asparagine glycosylation is found at Asn25 and Asn42.

It belongs to the glycoprotein hormones subunit beta family. In terms of assembly, heterodimer. The active follitropin is a heterodimer composed of an alpha chain/CGA shared with other hormones and a unique beta chain/FSHB shown here.

The protein localises to the secreted. Its function is as follows. Together with the alpha chain CGA constitutes follitropin, the follicle-stimulating hormone, and provides its biological specificity to the hormone heterodimer. Binds FSHR, a G protein-coupled receptor, on target cells to activate downstream signaling pathways. Follitropin is involved in follicle development and spermatogenesis in reproductive organs. The polypeptide is Follitropin subunit beta (FSHB) (Aotus nancymaae (Ma's night monkey)).